The chain runs to 100 residues: Signal recognition particle 19 kDa protein (100 aa).

It belongs to the SRP19 family. As to quaternary structure, part of the signal recognition particle protein translocation system, which is composed of SRP and FtsY. Archaeal SRP consists of a 7S RNA molecule of 300 nucleotides and two protein subunits: SRP54 and SRP19.

It localises to the cytoplasm. Its function is as follows. Involved in targeting and insertion of nascent membrane proteins into the cytoplasmic membrane. Binds directly to 7S RNA and mediates binding of the 54 kDa subunit of the SRP. The chain is Signal recognition particle 19 kDa protein from Pyrococcus furiosus (strain ATCC 43587 / DSM 3638 / JCM 8422 / Vc1).